The following is a 291-amino-acid chain: MVKKSLRQFTLMATATVTLLLGSVPLYAQTADVQQKLAELERQSGGRLGVALINTADNSQILYRADERFAMCSTSKVMAAAAVLKKSESEPNLLNQRVEIKKSDLVNYNPIAEKHVNGTMSLAELSAAALQYSDNVAMNKLIAHVGGPASVTAFARQLGDETFRLDRTEPTLNTAIPGDPRDTTSPRAMAQTLRNLTLGKALGDSQRAQLVTWMKGNTTGAASIQAGLPASWVVGDKTGSGGYGTTNDIAVIWPKDRAPLILVTYFTQPQPKAESRRDVLASAAKIVTDGL.

The first 28 residues, 1 to 28 (MVKKSLRQFTLMATATVTLLLGSVPLYA), serve as a signal peptide directing secretion. S73 functions as the Nucleophile; acyl-ester intermediate in the catalytic mechanism. A beta-lactam is bound by residues K76, S133, E169, and S240.

It belongs to the class-A beta-lactamase family. As to quaternary structure, monomer.

Its subcellular location is the secreted. It carries out the reaction a beta-lactam + H2O = a substituted beta-amino acid. Inhibited by the beta-lactamase-blocking agents clavulanic acid and avibactam, via a covalent binding to Ser-73. Functionally, extended-spectrum beta-lactamase (ESBL) which confers resistance to penicillins, as well as first, second, third and fourth-generation cephalosporins. Has cefotaxime- and ceftazidime-hydrolyzing activity. Inactive against the carbapenem antibiotics, imipenem, meropenem and ertapenem. This is Beta-lactamase CTX-M-15 from Escherichia coli O25b:H4.